A 429-amino-acid polypeptide reads, in one-letter code: Ribosomal RNA small subunit methyltransferase B (429 aa).

Residues 254-260, D277, D303, and D322 contribute to the S-adenosyl-L-methionine site; that span reads CAAPGGK. Residue C375 is the Nucleophile of the active site.

It belongs to the class I-like SAM-binding methyltransferase superfamily. RsmB/NOP family.

The protein localises to the cytoplasm. It carries out the reaction cytidine(967) in 16S rRNA + S-adenosyl-L-methionine = 5-methylcytidine(967) in 16S rRNA + S-adenosyl-L-homocysteine + H(+). Specifically methylates the cytosine at position 967 (m5C967) of 16S rRNA. The polypeptide is Ribosomal RNA small subunit methyltransferase B (Erwinia tasmaniensis (strain DSM 17950 / CFBP 7177 / CIP 109463 / NCPPB 4357 / Et1/99)).